The primary structure comprises 528 residues: Peptide chain release factor 3 (528 aa).

Residues 11 to 279 (NKRRTFAIIS…GIVEWAPKPL (269 aa)) enclose the tr-type G domain. Residues 20-27 (SHPDAGKT), 88-92 (DTPGH), and 142-145 (NKLD) each bind GTP.

It belongs to the TRAFAC class translation factor GTPase superfamily. Classic translation factor GTPase family. PrfC subfamily.

It is found in the cytoplasm. Its function is as follows. Increases the formation of ribosomal termination complexes and stimulates activities of RF-1 and RF-2. It binds guanine nucleotides and has strong preference for UGA stop codons. It may interact directly with the ribosome. The stimulation of RF-1 and RF-2 is significantly reduced by GTP and GDP, but not by GMP. The polypeptide is Peptide chain release factor 3 (Shewanella sp. (strain W3-18-1)).